Reading from the N-terminus, the 93-residue chain is Large ribosomal subunit protein bL31B (93 aa).

The protein belongs to the bacterial ribosomal protein bL31 family. Type B subfamily. Part of the 50S ribosomal subunit.

This is Large ribosomal subunit protein bL31B from Pseudomonas syringae pv. syringae (strain B728a).